We begin with the raw amino-acid sequence, 348 residues long: N6-Methyl-AMP deaminase (348 aa).

Zn(2+)-binding residues include His-18 and His-20. N(6)-methyl-AMP-binding positions include His-20, Asn-22, His-68, 100-103 (STPR), Asp-142, and Gly-175. A Zn(2+)-binding site is contributed by His-202. Residues Glu-205, Asp-287, and Asp-288 each contribute to the N(6)-methyl-AMP site. The Proton donor role is filled by Glu-205. Residue Asp-287 participates in Zn(2+) binding.

The protein belongs to the metallo-dependent hydrolases superfamily. Adenosine and AMP deaminases family. Monomer. It depends on Zn(2+) as a cofactor.

It catalyses the reaction N(6)-methyl-AMP + H2O + H(+) = IMP + methylamine. Functionally, catalyzes the hydrolysis of the free cytosolic methylated adenosine nucleotide N(6)-methyl-AMP (N6-mAMP) to produce inositol monophosphate (IMP) and methylamine. Is required for the catabolism of cytosolic N6-mAMP, which is derived from the degradation of mRNA containing N6-methylated adenine (m6A). This is N6-Methyl-AMP deaminase (mapda) from Danio rerio (Zebrafish).